The following is a 349-amino-acid chain: Isopentenyl-diphosphate delta-isomerase (349 aa).

6-7 (RK) provides a ligand contact to substrate. FMN contacts are provided by residues 62–64 (AMT), Ser93, and Asn122. Gln152 serves as a coordination point for substrate. Glu153 is a Mg(2+) binding site. FMN-binding positions include Lys184, Thr214, 259 to 261 (GVR), and 280 to 281 (AG).

Belongs to the IPP isomerase type 2 family. Homooctamer. Dimer of tetramers. Requires FMN as cofactor. NADPH is required as a cofactor. Mg(2+) serves as cofactor.

The protein localises to the cytoplasm. The enzyme catalyses isopentenyl diphosphate = dimethylallyl diphosphate. In terms of biological role, involved in the biosynthesis of isoprenoids. Catalyzes the 1,3-allylic rearrangement of the homoallylic substrate isopentenyl (IPP) to its allylic isomer, dimethylallyl diphosphate (DMAPP). In Geobacillus sp. (strain WCH70), this protein is Isopentenyl-diphosphate delta-isomerase.